Reading from the N-terminus, the 303-residue chain is Monoglyceride lipase (303 aa).

A Phosphothreonine modification is found at Thr-10. The residue at position 58 (Tyr-58) is a 3'-nitrotyrosine. Ser-122 functions as the Nucleophile in the catalytic mechanism. Residue Ser-189 is modified to Phosphoserine. Active-site charge relay system residues include Asp-239 and His-269.

Belongs to the AB hydrolase superfamily. Monoacylglycerol lipase family. Homodimer. In terms of tissue distribution, ubiquitous.

It is found in the cytoplasm. Its subcellular location is the cytosol. The protein localises to the membrane. The enzyme catalyses Hydrolyzes glycerol monoesters of long-chain fatty acids.. The catalysed reaction is a 1-acylglycerol + H2O = glycerol + a fatty acid + H(+). It carries out the reaction a 2-acylglycerol + H2O = glycerol + a fatty acid + H(+). It catalyses the reaction 2-(5Z,8Z,11Z,14Z-eicosatetraenoyl)-glycerol + H2O = glycerol + (5Z,8Z,11Z,14Z)-eicosatetraenoate + H(+). The enzyme catalyses 1-octanoylglycerol + H2O = octanoate + glycerol + H(+). The catalysed reaction is 1-decanoylglycerol + H2O = decanoate + glycerol + H(+). It carries out the reaction 1-dodecanoylglycerol + H2O = dodecanoate + glycerol + H(+). It catalyses the reaction 1-tetradecanoylglycerol + H2O = tetradecanoate + glycerol + H(+). The enzyme catalyses 2-hexadecanoylglycerol + H2O = glycerol + hexadecanoate + H(+). The catalysed reaction is 1-(9Z-octadecenoyl)-glycerol + H2O = glycerol + (9Z)-octadecenoate + H(+). It carries out the reaction 2-(9Z-octadecenoyl)-glycerol + H2O = glycerol + (9Z)-octadecenoate + H(+). It catalyses the reaction 2-(9Z,12Z-octadecadienoyl)-glycerol + H2O = (9Z,12Z)-octadecadienoate + glycerol + H(+). The enzyme catalyses 1-(5Z,8Z,11Z,14Z-eicosatetraenoyl)-glycerol + H2O = glycerol + (5Z,8Z,11Z,14Z)-eicosatetraenoate + H(+). The catalysed reaction is 1-(9Z,12Z-octadecadienoyl)-glycerol + H2O = (9Z,12Z)-octadecadienoate + glycerol + H(+). It carries out the reaction 1-hexadecanoylglycerol + H2O = glycerol + hexadecanoate + H(+). It catalyses the reaction 1-octadecanoylglycerol + H2O = octadecanoate + glycerol + H(+). The enzyme catalyses prostaglandin E2 1-glyceryl ester + H2O = prostaglandin E2 + glycerol + H(+). The catalysed reaction is prostaglandin D2-1-glycerol ester + H2O = prostaglandin D2 + glycerol + H(+). It carries out the reaction 2-glyceryl-15-deoxy-Delta(12,14)-prostaglandin J2 + H2O = 15-deoxy-Delta(12,14)-prostaglandin J2 + glycerol + H(+). It catalyses the reaction prostaglandin F2alpha 1-glyceryl ester + H2O = prostaglandin F2alpha + glycerol + H(+). It functions in the pathway glycerolipid metabolism; triacylglycerol degradation. Converts monoacylglycerides to free fatty acids and glycerol. Hydrolyzes the endocannabinoid 2-arachidonoylglycerol, and thereby contributes to the regulation of endocannabinoid signaling, nociperception and perception of pain. Regulates the levels of fatty acids that serve as signaling molecules and promote cancer cell migration, invasion and tumor growth. The sequence is that of Monoglyceride lipase from Mus musculus (Mouse).